Here is a 315-residue protein sequence, read N- to C-terminus: piRNA biogenesis protein EXD1 (315 aa).

Residues 141–228 enclose the 3'-5' exonuclease domain; sequence IYIFDIQVMQ…ECLTNYLGLQ (88 aa).

Belongs to the EXD1 family. As to quaternary structure, homodimer. Component of the PET complex, at least composed of EXD1, SIWI, TDRD12 and piRNAs.

It localises to the cytoplasm. Its function is as follows. RNA-binding component of the PET complex, a multiprotein complex required for the processing of piRNAs during spermatogenesis. The piRNA metabolic process mediates the repression of transposable elements during meiosis by forming complexes composed of piRNAs and Piwi proteins and governs the methylation and subsequent repression of transposable elements, preventing their mobilization, which is essential for the germline integrity. The PET complex is required during the secondary piRNAs metabolic process for the PIWIL2 slicing-triggered loading of PIWIL4 piRNAs. In the PET complex, EXD1 probably acts as an RNA adapter. EXD1 is an inactive exonuclease. The chain is piRNA biogenesis protein EXD1 from Bombyx mori (Silk moth).